The following is a 332-amino-acid chain: Chorismate synthase (332 aa).

Residue Arg-46 coordinates NADP(+). FMN is bound by residues 123-125 (HFS), Gly-253, 268-272 (KPTSS), and Arg-295.

This sequence belongs to the chorismate synthase family. In terms of assembly, homotetramer. The cofactor is FMNH2.

The enzyme catalyses 5-O-(1-carboxyvinyl)-3-phosphoshikimate = chorismate + phosphate. It functions in the pathway metabolic intermediate biosynthesis; chorismate biosynthesis; chorismate from D-erythrose 4-phosphate and phosphoenolpyruvate: step 7/7. Its function is as follows. Catalyzes the anti-1,4-elimination of the C-3 phosphate and the C-6 proR hydrogen from 5-enolpyruvylshikimate-3-phosphate (EPSP) to yield chorismate, which is the branch point compound that serves as the starting substrate for the three terminal pathways of aromatic amino acid biosynthesis. This reaction introduces a second double bond into the aromatic ring system. This is Chorismate synthase from Chitinophaga pinensis (strain ATCC 43595 / DSM 2588 / LMG 13176 / NBRC 15968 / NCIMB 11800 / UQM 2034).